We begin with the raw amino-acid sequence, 2898 residues long: Pericentrin (2898 aa).

Positions 1–117 (MEDEQEQRRR…QPPPPQTAHS (117 aa)) are disordered. Residues 34 to 44 (SKKKTAKRKGS) show a composition bias toward basic residues. Serine 44 is subject to Phosphoserine. Coiled coils occupy residues 127-343 (LNNM…IRLL) and 382-434 (AQQQ…DSLE). Residues 429 to 460 (REDSLESTEISSSCVLPEETSGREGKEPPDPL) form a disordered region. Positions 448 to 457 (TSGREGKEPP) are enriched in basic and acidic residues. Coiled coils occupy residues 468–527 (KVQE…LREK), 611–696 (CALQ…LETH), 727–787 (VADV…SLRM), and 872–939 (SQDQ…LRRL). Position 1022 is a phosphoserine (serine 1022). Coiled coils occupy residues 1069 to 1383 (EREF…QENM), 1429 to 1482 (NEVV…SLMG), and 1529 to 1593 (QLLA…AKEA). A Phosphoserine modification is found at serine 1437. Disordered stretches follow at residues 1745–1786 (VASR…DDVL), 1815–1880 (TQEK…PLTP), and 1958–1979 (TSPS…GPDI). Composition is skewed to polar residues over residues 1747-1766 (SRDT…SENG) and 1817-1834 (EKLT…SGHS). An interaction with CDK5RAP2 region spans residues 1801–1822 (NQDLLVQVEMPDFPTQEKLTSQ). 4 positions are modified to phosphoserine: serine 1828, serine 1859, serine 1860, and serine 1959. Residues 1963–1976 (ELARRSDGSRKSDG) show a composition bias toward basic and acidic residues. A Phosphoserine modification is found at serine 1987. The span at 2046–2055 (SESQDPSSAL) shows a compositional bias: polar residues. The tract at residues 2046-2088 (SESQDPSSALNKGEPRDPLDGFPRDSQALSEVTTDKGEKESLE) is disordered. 2 stretches are compositionally biased toward basic and acidic residues: residues 2058–2068 (GEPRDPLDGFP) and 2078–2088 (TTDKGEKESLE). At serine 2128 the chain carries Phosphoserine. 2 coiled-coil regions span residues 2211–2403 (KVEQ…EALQ) and 2429–2590 (HALL…ELSM). 2 disordered regions span residues 2509-2532 (VSGG…QFQE) and 2653-2684 (NRQS…QTTS). Positions 2545 to 2810 (LCAAGLLTSF…SQRQRSPSGP (266 aa)) are interaction with NEK2. The segment covering 2653–2671 (NRQSKSSLKQDGTDLQSSL) has biased composition (polar residues). The calmodulin-binding stretch occupies residues 2758 to 2771 (KFRTAVRVVIAVLR). Residues 2787 to 2898 (ALVHPKSTRH…QKSCHQKIKQ (112 aa)) are disordered. A compositionally biased stretch (basic residues) spans 2792 to 2802 (KSTRHGHRTSQ). Residues 2845-2860 (TSTPSSRLERSLTASQ) are compositionally biased toward polar residues. Positions 2861–2874 (DPEHSLTEYIHHLE) are enriched in basic and acidic residues. Residue serine 2865 is modified to Phosphoserine.

As to quaternary structure, interacts with DISC1 and PCM1. Binds calmodulin. Interacts with CEP131. Interacts with CDK5RAP2; the interaction is leading to centrosomal localization of PCNT and CDK5RAP2. Interacts with CHD3. Interacts with CHD4; the interaction regulates centrosome integrity. Interacts with NEK2. Interacts with CCDC13. Interacts with CEP68. Interacts with ATF5; the ATF5:PCNT:polyglutamylated tubulin (PGT) tripartite unites the mother centriole and the pericentriolar material (PCM) in the centrosome. Cleaved during mitotis which leads to removal of CDK5RAP2 from the centrosome and promotes centriole disengagement and subsequent centriole separation. The C-terminal fragment is rapidly degraded following cleavage. Post-translationally, ubiquitinated by TRIM43; leading to proteasomal degradation. Expressed in heart and lung (at protein level). Expressed in kidney, thymus, liver, brain, muscle, testis, spleen, lung and heart.

The protein resides in the cytoplasm. Its subcellular location is the cytoskeleton. It is found in the microtubule organizing center. It localises to the centrosome. In terms of biological role, integral component of the filamentous matrix of the centrosome involved in the initial establishment of organized microtubule arrays in both mitosis and meiosis. Plays a role, together with DISC1, in the microtubule network formation. Is an integral component of the pericentriolar material (PCM). May play an important role in preventing premature centrosome splitting during interphase by inhibiting NEK2 kinase activity at the centrosome. The chain is Pericentrin (Pcnt) from Mus musculus (Mouse).